Consider the following 556-residue polypeptide: 2-succinyl-5-enolpyruvyl-6-hydroxy-3-cyclohexene-1-carboxylate synthase (556 aa).

This sequence belongs to the TPP enzyme family. MenD subfamily. In terms of assembly, homodimer. It depends on Mg(2+) as a cofactor. The cofactor is Mn(2+). Requires thiamine diphosphate as cofactor.

The enzyme catalyses isochorismate + 2-oxoglutarate + H(+) = 5-enolpyruvoyl-6-hydroxy-2-succinyl-cyclohex-3-ene-1-carboxylate + CO2. It participates in quinol/quinone metabolism; 1,4-dihydroxy-2-naphthoate biosynthesis; 1,4-dihydroxy-2-naphthoate from chorismate: step 2/7. It functions in the pathway quinol/quinone metabolism; menaquinone biosynthesis. Its function is as follows. Catalyzes the thiamine diphosphate-dependent decarboxylation of 2-oxoglutarate and the subsequent addition of the resulting succinic semialdehyde-thiamine pyrophosphate anion to isochorismate to yield 2-succinyl-5-enolpyruvyl-6-hydroxy-3-cyclohexene-1-carboxylate (SEPHCHC). The protein is 2-succinyl-5-enolpyruvyl-6-hydroxy-3-cyclohexene-1-carboxylate synthase of Shigella sonnei (strain Ss046).